We begin with the raw amino-acid sequence, 116 residues long: Large ribosomal subunit protein uL18 (116 aa).

It belongs to the universal ribosomal protein uL18 family. As to quaternary structure, part of the 50S ribosomal subunit; part of the 5S rRNA/L5/L18/L25 subcomplex. Contacts the 5S and 23S rRNAs.

Its function is as follows. This is one of the proteins that bind and probably mediate the attachment of the 5S RNA into the large ribosomal subunit, where it forms part of the central protuberance. In Pseudomonas putida (strain W619), this protein is Large ribosomal subunit protein uL18.